Here is a 124-residue protein sequence, read N- to C-terminus: Putative transmembrane protein FLJ36131 (124 aa).

Residues 1–2 (MY) lie on the Cytoplasmic side of the membrane. The chain crosses the membrane as a helical span at residues 3–23 (VSISFLLGLSHLVLCCLLTFI). Topologically, residues 24 to 124 (VNFYLPPESI…LLTTTSYSVS (101 aa)) are extracellular. N41 is a glycosylation site (N-linked (GlcNAc...) asparagine).

The protein resides in the membrane. The polypeptide is Putative transmembrane protein FLJ36131 (Homo sapiens (Human)).